The chain runs to 224 residues: Polysialic acid transport ATP-binding protein KpsT (224 aa).

The ABC transporter domain maps to 2-223 (IKIENLTKSY…EYKMYQDLDI (222 aa)). ATP is bound at residue 38 to 45 (GRNGAGKS).

Belongs to the ABC transporter superfamily.

Its subcellular location is the cell inner membrane. Functionally, putative ATP-binding protein, and an energy coupling component for the transport of polysialic acid across the cytoplasmic membrane. This chain is Polysialic acid transport ATP-binding protein KpsT (kpsT), found in Escherichia coli.